We begin with the raw amino-acid sequence, 276 residues long: MDWILICKALALGIVEGLTEFLPVSSTGHLIVAGSFLRFHPEQAKTFDVVIQFGAILAVCWEYRRRIVDVVTGLPAQREARRFTMNVVIATLPAIALALLFEKTIKSVLFAPVPVAVALVVGGAVILWVEGRQRERGKPSRVQSIDALTPLDALKVGLAQCFALIPGVSRSGSTIIGGMLFGLERRVATEFSFFLAIPVIFGATLYETAKDWHAFNVDSIGLFAIGLAAAFVSAFACVRWLLRYVASHDFTAFAWYRIVFGLFVLLVGYSGWIEWI.

Helical transmembrane passes span methionine 85–isoleucine 105, valine 108–tryptophan 128, valine 187–glutamate 207, valine 217–cysteine 237, and phenylalanine 253–isoleucine 273.

The protein belongs to the UppP family.

Its subcellular location is the cell inner membrane. It catalyses the reaction di-trans,octa-cis-undecaprenyl diphosphate + H2O = di-trans,octa-cis-undecaprenyl phosphate + phosphate + H(+). Functionally, catalyzes the dephosphorylation of undecaprenyl diphosphate (UPP). Confers resistance to bacitracin. The protein is Undecaprenyl-diphosphatase 1 of Burkholderia thailandensis (strain ATCC 700388 / DSM 13276 / CCUG 48851 / CIP 106301 / E264).